A 257-amino-acid polypeptide reads, in one-letter code: MSDSIIVFDKVKKAYGNFTVINELDFEVRRGEKVSIIGPSGSGKSTVLRILMTLEGINDGAVYVGGEPLWHELKNGSMMPATEKHLRKMRTQLGMVFQQFNLFPHMTVLRNLTEAPRVVLGLSKEEARRRAEELLELVGLVDHAHKFPAQLSGGQQQRVGIARALAMRPKIMLFDEPTSALDPELVGEVLNVIRRLAAEHDLTMLMVTHEMRFAREISDRVCFFDKGRIREEGTPEQLFSQPKEERTREFLKAVLDG.

The region spanning 6–251 (IVFDKVKKAY…PKEERTREFL (246 aa)) is the ABC transporter domain. 38 to 45 (GPSGSGKS) serves as a coordination point for ATP.

The protein belongs to the ABC transporter superfamily.

Its subcellular location is the cell inner membrane. In terms of biological role, probably part of a binding-protein-dependent transport system y4tEFGH for an amino acid. Probably responsible for energy coupling to the transport system. In Sinorhizobium fredii (strain NBRC 101917 / NGR234), this protein is Probable amino-acid ABC transporter ATP-binding protein y4tH.